A 59-amino-acid polypeptide reads, in one-letter code: Small, acid-soluble spore protein H 2 (59 aa).

Belongs to the SspH family.

The protein localises to the spore core. This Bacillus cytotoxicus (strain DSM 22905 / CIP 110041 / 391-98 / NVH 391-98) protein is Small, acid-soluble spore protein H 2.